We begin with the raw amino-acid sequence, 204 residues long: Lipid A acyltransferase PagP (204 aa).

Positions 1–25 are cleaved as a signal peptide; the sequence is MSYKHLISACIFSSLCLGQVNAVLA. Residues His-76, Asp-119, and Ser-120 contribute to the active site.

This sequence belongs to the lipid A palmitoyltransferase family. Homodimer.

It localises to the cell outer membrane. The enzyme catalyses a lipid A + a 1,2-diacyl-sn-glycero-3-phosphocholine = a hepta-acyl lipid A + a 2-acyl-sn-glycero-3-phosphocholine. It catalyses the reaction a lipid IVA + a 1,2-diacyl-sn-glycero-3-phosphocholine = a lipid IVB + a 2-acyl-sn-glycero-3-phosphocholine. The catalysed reaction is a lipid IIA + a 1,2-diacyl-sn-glycero-3-phosphocholine = a lipid IIB + a 2-acyl-sn-glycero-3-phosphocholine. Transfers a fatty acid residue from the sn-1 position of a phospholipid to the N-linked hydroxyfatty acid chain on the proximal unit of lipid A or its precursors. The protein is Lipid A acyltransferase PagP of Yersinia enterocolitica serotype O:8 / biotype 1B (strain NCTC 13174 / 8081).